The chain runs to 327 residues: Small ribosomal subunit protein uS4m (327 aa).

The 59-residue stretch at 96–154 (SRLDMSIHRALFASSALQARQLVLHGKVHVNGKPERRAYRQLLPGDLVTVDQKSVMNCV) folds into the S4 RNA-binding domain. Over residues 156 to 173 (ASSNNTPSIQDGKQTEQV) the composition is skewed to polar residues. The disordered stretch occupies residues 156–199 (ASSNNTPSIQDGKQTEQVSSKDGENEKKKDNDDDLFEQTSNGKL). Over residues 174–186 (SSKDGENEKKKDN) the composition is skewed to basic and acidic residues.

Belongs to the universal ribosomal protein uS4 family. In terms of assembly, component of the mitochondrial small ribosomal subunit (mt-SSU). Mature yeast 74S mitochondrial ribosomes consist of a small (37S) and a large (54S) subunit. The 37S small subunit contains a 15S ribosomal RNA (15S mt-rRNA) and at least 32 different proteins. The 54S large subunit contains a 21S rRNA (21S mt-rRNA) and at least 45 different proteins. uS3m, uS4m and uS5m form the narrow entry site of the mRNA channel.

The protein resides in the mitochondrion. Its function is as follows. Component of the mitochondrial ribosome (mitoribosome), a dedicated translation machinery responsible for the synthesis of mitochondrial genome-encoded proteins, including at least some of the essential transmembrane subunits of the mitochondrial respiratory chain. The mitoribosomes are attached to the mitochondrial inner membrane and translation products are cotranslationally integrated into the membrane. The chain is Small ribosomal subunit protein uS4m (nam9) from Schizosaccharomyces pombe (strain 972 / ATCC 24843) (Fission yeast).